Reading from the N-terminus, the 89-residue chain is MSLSTEAKAKILADFGRCENDTGSTEVQVALLTAQINHLQAHFKEHIHDHHSRRGLLRMVSSRRKLTAYLKRTDLARYTALIQKLGLRR.

Belongs to the universal ribosomal protein uS15 family. As to quaternary structure, part of the 30S ribosomal subunit. Forms a bridge to the 50S subunit in the 70S ribosome, contacting the 23S rRNA.

One of the primary rRNA binding proteins, it binds directly to 16S rRNA where it helps nucleate assembly of the platform of the 30S subunit by binding and bridging several RNA helices of the 16S rRNA. Its function is as follows. Forms an intersubunit bridge (bridge B4) with the 23S rRNA of the 50S subunit in the ribosome. In Shewanella baltica (strain OS185), this protein is Small ribosomal subunit protein uS15.